The chain runs to 112 residues: Tyrosine-protein phosphatase 7 (112 aa).

Residues 1 to 112 enclose the Tyrosine-protein phosphatase domain; it reads NNVTIIVMIT…SSPESGPIVV (112 aa). Asp-82 provides a ligand contact to substrate.

It belongs to the protein-tyrosine phosphatase family.

It carries out the reaction O-phospho-L-tyrosyl-[protein] + H2O = L-tyrosyl-[protein] + phosphate. The sequence is that of Tyrosine-protein phosphatase 7 (STY-7) from Styela plicata (Wrinkled sea squirt).